A 357-amino-acid chain; its full sequence is Alanine racemase, catabolic (357 aa).

Lys33 serves as the catalytic Proton acceptor; specific for D-alanine. Position 33 is an N6-(pyridoxal phosphate)lysine (Lys33). Residue Arg129 participates in substrate binding. The Proton acceptor; specific for L-alanine role is filled by Tyr253. Met301 is a substrate binding site.

Belongs to the alanine racemase family. The cofactor is pyridoxal 5'-phosphate.

The enzyme catalyses L-alanine = D-alanine. The protein operates within amino-acid biosynthesis; D-alanine biosynthesis; D-alanine from L-alanine: step 1/1. In terms of biological role, isomerizes L-alanine to D-alanine which is then likely oxidized to pyruvate by DadA. Shows racemase activity with both alanine stereoisomers, negligible activity with D-cysteine and L-serine, and exhibits no activity with the remaining natural chiral amino acids. The chain is Alanine racemase, catabolic from Pseudomonas putida (strain ATCC 47054 / DSM 6125 / CFBP 8728 / NCIMB 11950 / KT2440).